Consider the following 297-residue polypeptide: Calponin-1 (297 aa).

In terms of domain architecture, Calponin-homology (CH) spans 28 to 131 (HQREQELREW…STLLALASMA (104 aa)). 3 Calponin-like repeats span residues 164–189 (IGLQ…RHLY), 204–229 (ISLQ…RQIF), and 243–268 (VSLQ…RQVY). T170 bears the Phosphothreonine; by ROCK2 mark. S175 is subject to Phosphoserine; by ROCK2. Phosphothreonine; by ROCK2 is present on residues T180 and T184. At T259 the chain carries Phosphothreonine; by ROCK2.

Belongs to the calponin family. As to quaternary structure, part of cGMP kinase signaling complex at least composed of ACTA2/alpha-actin, CNN1/calponin H1, PLN/phospholamban, PRKG1 and ITPR1. In terms of tissue distribution, smooth muscle, and tissues containing significant amounts of smooth muscle.

In terms of biological role, thin filament-associated protein that is implicated in the regulation and modulation of smooth muscle contraction. It is capable of binding to actin, calmodulin and tropomyosin. The interaction of calponin with actin inhibits the actomyosin Mg-ATPase activity. This Homo sapiens (Human) protein is Calponin-1 (CNN1).